The chain runs to 310 residues: Ribosomal RNA small subunit methyltransferase H (310 aa).

S-adenosyl-L-methionine is bound by residues 32-34, Asp-52, Phe-79, Asp-100, and Gln-107; that span reads AGH.

The protein belongs to the methyltransferase superfamily. RsmH family.

Its subcellular location is the cytoplasm. The catalysed reaction is cytidine(1402) in 16S rRNA + S-adenosyl-L-methionine = N(4)-methylcytidine(1402) in 16S rRNA + S-adenosyl-L-homocysteine + H(+). In terms of biological role, specifically methylates the N4 position of cytidine in position 1402 (C1402) of 16S rRNA. The polypeptide is Ribosomal RNA small subunit methyltransferase H (Bacillus pumilus (strain SAFR-032)).